The sequence spans 776 residues: 3-isopropylmalate dehydratase (776 aa).

Cys357, Cys418, and Cys421 together coordinate [4Fe-4S] cluster. Over residues 482 to 493 the composition is skewed to basic and acidic residues; it reads SAPKVEVRHDTD. Disordered stretches follow at residues 482-518 and 525-544; these read SAPK…SDVA and DIPV…SADA. The segment covering 527–538 has biased composition (polar residues); the sequence is PVSNSSTQSPGS.

It belongs to the aconitase/IPM isomerase family. Monomer. Requires [4Fe-4S] cluster as cofactor.

It catalyses the reaction (2R,3S)-3-isopropylmalate = (2S)-2-isopropylmalate. Its pathway is amino-acid biosynthesis; L-leucine biosynthesis; L-leucine from 3-methyl-2-oxobutanoate: step 2/4. Its function is as follows. Catalyzes the isomerization between 2-isopropylmalate and 3-isopropylmalate, via the formation of 2-isopropylmaleate. The sequence is that of 3-isopropylmalate dehydratase (LEU1) from Eremothecium gossypii (strain ATCC 10895 / CBS 109.51 / FGSC 9923 / NRRL Y-1056) (Yeast).